A 500-amino-acid chain; its full sequence is Probable cytosol aminopeptidase (500 aa).

Residues K267 and D272 each coordinate Mn(2+). K279 is an active-site residue. Mn(2+) is bound by residues D290, D349, and E351. Residue R353 is part of the active site.

This sequence belongs to the peptidase M17 family. Mn(2+) serves as cofactor.

It is found in the cytoplasm. The catalysed reaction is Release of an N-terminal amino acid, Xaa-|-Yaa-, in which Xaa is preferably Leu, but may be other amino acids including Pro although not Arg or Lys, and Yaa may be Pro. Amino acid amides and methyl esters are also readily hydrolyzed, but rates on arylamides are exceedingly low.. It catalyses the reaction Release of an N-terminal amino acid, preferentially leucine, but not glutamic or aspartic acids.. Its function is as follows. Presumably involved in the processing and regular turnover of intracellular proteins. Catalyzes the removal of unsubstituted N-terminal amino acids from various peptides. This is Probable cytosol aminopeptidase from Tolumonas auensis (strain DSM 9187 / NBRC 110442 / TA 4).